The sequence spans 323 residues: tRNA U34 carboxymethyltransferase (323 aa).

Residues lysine 91, tryptophan 105, lysine 110, glycine 130, 152–154, 181–182, methionine 196, tyrosine 200, and arginine 315 each bind carboxy-S-adenosyl-L-methionine; these read DPT and IE.

The protein belongs to the class I-like SAM-binding methyltransferase superfamily. CmoB family. In terms of assembly, homotetramer.

It catalyses the reaction carboxy-S-adenosyl-L-methionine + 5-hydroxyuridine(34) in tRNA = 5-carboxymethoxyuridine(34) in tRNA + S-adenosyl-L-homocysteine + H(+). In terms of biological role, catalyzes carboxymethyl transfer from carboxy-S-adenosyl-L-methionine (Cx-SAM) to 5-hydroxyuridine (ho5U) to form 5-carboxymethoxyuridine (cmo5U) at position 34 in tRNAs. This Escherichia coli O139:H28 (strain E24377A / ETEC) protein is tRNA U34 carboxymethyltransferase.